Reading from the N-terminus, the 472-residue chain is Uronate isomerase (472 aa).

It belongs to the metallo-dependent hydrolases superfamily. Uronate isomerase family.

It catalyses the reaction D-glucuronate = D-fructuronate. The enzyme catalyses aldehydo-D-galacturonate = keto-D-tagaturonate. It participates in carbohydrate metabolism; pentose and glucuronate interconversion. This Opitutus terrae (strain DSM 11246 / JCM 15787 / PB90-1) protein is Uronate isomerase.